Reading from the N-terminus, the 341-residue chain is MEPAFGEVNQLGGVFVNGRPLPNAIRLRIVELAQLGIRPCDISRQLRVSHGCVSKILARYNETGSILPGAIGGSKPRVTTPTVVKHIRTYKQRDPGIFAWEIRDRLLADGVCDKYNVPSVSSISRILRNKIGNLAQQGHYDSYKQHQPAPQPALPYNHIYSYPSPITAAAAKVPTPPGVPAIPGSVAMPRTWPSSHSVTDILGIRSITDQVSDSSPYHSPKVEEWSSLGRNNFPAAAPHAVNGLEKGALEQETKYSQAPNGLPAVGSFVSASSMAPYPTPAQVSPYMTYSAAPSGYVAGHGWQHAGSTPLSPHNCDIPASLAFKGMQAAREGSHSVTASAL.

Positions Ala-4–Lys-130 form a DNA-binding region, paired. The tract at residues Glu-7–Thr-63 is PAI subdomain. Residues Thr-82–Lys-130 form an RED subdomain region. The segment at Ala-168–Pro-189 is interaction with KDM5B.

As to quaternary structure, interacts with KDM5B.

The protein resides in the nucleus. Transcription factor required for normal development of thymus, parathyroid glands, ultimobranchial bodies, teeth, skeletal elements of skull and larynx as well as distal limbs. The sequence is that of Paired box protein Pax-9 (PAX9) from Leontopithecus rosalia (Golden lion tamarin).